The following is a 311-amino-acid chain: Protoheme IX farnesyltransferase (311 aa).

8 helical membrane passes run 30-50 (VVQL…PGWP), 55-75 (WGVA…AAAF), 108-128 (FAVL…NALT), 129-149 (MWLT…LLKP), 153-173 (QNIV…WAAM), 182-202 (WILC…LALY), 233-253 (FVLF…WFYL), and 287-307 (IWHL…GPLL).

Belongs to the UbiA prenyltransferase family. Protoheme IX farnesyltransferase subfamily.

The protein localises to the cell inner membrane. The enzyme catalyses heme b + (2E,6E)-farnesyl diphosphate + H2O = Fe(II)-heme o + diphosphate. The protein operates within porphyrin-containing compound metabolism; heme O biosynthesis; heme O from protoheme: step 1/1. Converts heme B (protoheme IX) to heme O by substitution of the vinyl group on carbon 2 of heme B porphyrin ring with a hydroxyethyl farnesyl side group. This chain is Protoheme IX farnesyltransferase, found in Methylibium petroleiphilum (strain ATCC BAA-1232 / LMG 22953 / PM1).